Consider the following 198-residue polypeptide: Transmembrane protein 17 (198 aa).

N13 carries N-linked (GlcNAc...) asparagine glycosylation. 4 helical membrane-spanning segments follow: residues 47 to 67 (LYFNSYFFPLWWVSCIVMLHL), 78 to 98 (FIVITVVILITLIEAIRLYLG), 110 to 130 (LAGFWLLSLLLQLPLLLFLLL), and 142 to 162 (AIHSIFTVFLTFQVISAFLTL).

This sequence belongs to the TMEM17 family. As to quaternary structure, part of the tectonic-like complex (also named B9 complex).

It localises to the cell projection. The protein resides in the cilium membrane. Its function is as follows. Transmembrane component of the tectonic-like complex, a complex localized at the transition zone of primary cilia and acting as a barrier that prevents diffusion of transmembrane proteins between the cilia and plasma membranes. Required for ciliogenesis and sonic hedgehog/SHH signaling. The polypeptide is Transmembrane protein 17 (Tmem17) (Rattus norvegicus (Rat)).